Here is a 185-residue protein sequence, read N- to C-terminus: Ribosome-recycling factor (185 aa).

Belongs to the RRF family.

It localises to the cytoplasm. Functionally, responsible for the release of ribosomes from messenger RNA at the termination of protein biosynthesis. May increase the efficiency of translation by recycling ribosomes from one round of translation to another. The sequence is that of Ribosome-recycling factor from Wolbachia sp. subsp. Drosophila simulans (strain wRi).